Consider the following 616-residue polypeptide: Protein cereblon (616 aa).

Disordered stretches follow at residues 1–39 (MDEE…DDSV), 63–137 (FGPS…AMPR), and 182–220 (SQER…DIDM). The span at 11-32 (AQEQEVAGSAGEAAAGPSGAEV) shows a compositional bias: low complexity. Residues 96-107 (SEEDIVLDDGTE) show a composition bias toward acidic residues. Over residues 183 to 192 (QERRRSRNSD) the composition is skewed to basic and acidic residues. Acidic residues predominate over residues 194–203 (VSPEAEDDEL). A compositionally biased stretch (pro residues) spans 206–215 (HPPPPPPRPP). A Lon N-terminal domain is found at 257 to 482 (HMLIFLHQYI…LIGGILKEET (226 aa)). The region spanning 481–590 (ETLFYCRYCN…LAGSSVRIGK (110 aa)) is the CULT domain. Residues Cys-486, Cys-489, Cys-555, and Cys-558 each contribute to the Zn(2+) site.

This sequence belongs to the CRBN family. Likely a component of a DCX (DDB1-CUL4-X-box) protein ligase complex. May interact with pic/DDB1. Ubiquitinated.

It localises to the nucleus. It participates in protein modification; protein ubiquitination. Its function is as follows. Substrate recognition component of a DCX (DDB1-CUL4-X-box) E3 protein ligase complex that mediates the ubiquitination and subsequent proteasomal degradation of target proteins. Has an essential role in mediating growth by negatively regulating insulin signaling. It also has a role in maintaining presynaptic function in the neuromuscular junction synapses of third-instar larvae. In Drosophila persimilis (Fruit fly), this protein is Protein cereblon.